The primary structure comprises 350 residues: Anthranilate phosphoribosyltransferase (350 aa).

5-phospho-alpha-D-ribose 1-diphosphate-binding positions include glycine 81, 84-85, threonine 89, 91-94, 109-117, and serine 121; these read GD, NIST, and KHGGRSVSS. Glycine 81 lines the anthranilate pocket. Serine 93 provides a ligand contact to Mg(2+). An anthranilate-binding site is contributed by arginine 167. Aspartate 230 and glutamate 231 together coordinate Mg(2+).

The protein belongs to the anthranilate phosphoribosyltransferase family. Homodimer. Mg(2+) is required as a cofactor.

The enzyme catalyses N-(5-phospho-beta-D-ribosyl)anthranilate + diphosphate = 5-phospho-alpha-D-ribose 1-diphosphate + anthranilate. It participates in amino-acid biosynthesis; L-tryptophan biosynthesis; L-tryptophan from chorismate: step 2/5. Its function is as follows. Catalyzes the transfer of the phosphoribosyl group of 5-phosphorylribose-1-pyrophosphate (PRPP) to anthranilate to yield N-(5'-phosphoribosyl)-anthranilate (PRA). The chain is Anthranilate phosphoribosyltransferase from Nitrosospira multiformis (strain ATCC 25196 / NCIMB 11849 / C 71).